Consider the following 579-residue polypeptide: Glypican-2 (579 aa).

The N-terminal stretch at 1–21 is a signal peptide; sequence MSALRPLLLLLLHLCPGLGPG. O-linked (Xyl...) (heparan sulfate) serine glycosylation is found at Ser55, Ser92, and Ser155. Disordered stretches follow at residues 347 to 382 and 483 to 552; these read GTPH…PTTA and ALGQ…GRSR. Over residues 361–379 the composition is skewed to basic and acidic residues; sequence APREEASRSWRASAEEERP. O-linked (Xyl...) (heparan sulfate) serine glycosylation is found at Ser498 and Ser500. The span at 517 to 527 shows a compositional bias: pro residues; that stretch reads VVPPARPPRPP. A lipid anchor (GPI-anchor amidated serine) is attached at Ser556. Positions 557-579 are cleaved as a propeptide — removed in mature form; the sequence is SVGLHTPLVLLLLPSALTLLVLR.

It belongs to the glypican family. In terms of assembly, interacts (via heparan sulfate) with PTN; this interaction promotes neurite outgrowth through binding of PTN with chondroitin sulfate of proteoglycans, thereby releasing PTPRS of chondroitin sulfate proteoglycans (CSPGs) and leading to binding with heparan sulfate of GPC2. Interacts (heparan sulfate chain) with MDK; this interaction is inhibited by heparin followed by chondroitin sulfate E; this interaction induces GPC2 clustering through heparan sulfate chain; this interaction induces neuronal cell adhesion and neurite outgrowth.

It localises to the cell membrane. The protein localises to the secreted. It is found in the extracellular space. Functionally, cell surface proteoglycan that bears heparan sulfate. May fulfill a function related to the motile behaviors of developing neurons. The polypeptide is Glypican-2 (Gpc2) (Mus musculus (Mouse)).